Here is a 267-residue protein sequence, read N- to C-terminus: Glutamate racemase (267 aa).

Residues 13–14 and 45–46 each bind substrate; these read DS and YS. The Proton donor/acceptor role is filled by Cys-77. Residue 78-79 coordinates substrate; it reads NT. The Proton donor/acceptor role is filled by Cys-188. Position 189–190 (189–190) interacts with substrate; sequence TH.

The protein belongs to the aspartate/glutamate racemases family.

It catalyses the reaction L-glutamate = D-glutamate. It functions in the pathway cell wall biogenesis; peptidoglycan biosynthesis. Provides the (R)-glutamate required for cell wall biosynthesis. This is Glutamate racemase from Histophilus somni (strain 129Pt) (Haemophilus somnus).